The following is a 421-amino-acid chain: Cyclin-A2 (421 aa).

M1 is subject to N-acetylmethionine. The disordered stretch occupies residues 1–60 (MPGSSRQSGREAGSALLSLQQEDQENVNPEKAAPDQRARAALKTGNARGNAPQQRLKARR). S5 is subject to Phosphoserine.

It belongs to the cyclin family. Cyclin AB subfamily. Interacts with the CDK1 and CDK2 protein kinases to form serine/threonine kinase holoenzyme complexes. Interacts with CDK1 (hyperphosphorylated form in G1 and underphosphorylated forms in S and G2). Interacts with CDK2; the interaction increases from G1 to G2. Interacts (associated with CDK2 but not with CDK1) with SCAPER; regulates the activity of CCNA2/CDK2 by transiently maintaining CCNA2 in the cytoplasm. Forms a ternary complex with CDK2 and CDKN1B; CDKN1B inhibits the kinase activity of CDK2 through conformational rearrangements. Interacts with INCA1. Polyubiquitinated via 'Lys-11'-linked ubiquitin by the anaphase-promoting complex (APC/C), leading to its degradation by the proteasome. Deubiquitinated and stabilized by USP37 enables entry into S phase. Ubiquitinated during the G1 phase by the SCF(FBXO31) complex, leading to its proteasomal degradation.

The protein resides in the nucleus. It is found in the cytoplasm. Its function is as follows. Cyclin which controls both the G1/S and the G2/M transition phases of the cell cycle. Functions through the formation of specific serine/threonine kinase holoenzyme complexes with the cyclin-dependent protein kinases CDK1 and CDK2. The cyclin subunit confers the substrate specificity of these complexes and differentially interacts with and activates CDK1 and CDK2 throughout the cell cycle. In Mesocricetus auratus (Golden hamster), this protein is Cyclin-A2.